Consider the following 436-residue polypeptide: UPF0597 protein YhaM (436 aa).

The protein belongs to the UPF0597 family.

The polypeptide is UPF0597 protein YhaM (Salmonella newport (strain SL254)).